The sequence spans 247 residues: MIYQGFASVYDELMSHAPYDQWTKWIEASLPEKGRILDLACGTGEISIRLAEKGFEVTGIDLSEEMLSFAQQKVSSSQPILFLQQDMREITGFDGQFDAVVICCDSLNYLKTKNDVIETFKSVFRVLKPEGILLFDVHSSFKIAEVFPDSTFADQDEDISYIWQSFAGSDELSVIHDMSFFVWNGEAYDRFDETHEQRTFPVEEYEEMLKNCGFQLHRVTADFTDTEPSAQSERLFFKAQKSKTIVS.

The protein belongs to the methyltransferase superfamily.

In terms of biological role, may be a S-adenosyl-L-methionine (SAM)-dependent methyltransferase. In Bacillus subtilis (strain 168), this protein is Putative methyltransferase YqeM (yqeM).